Reading from the N-terminus, the 404-residue chain is MKLPIYLDYSATTPVDPRVAEKMMNYLTRDGIFGNPASRSHRFGWQAEEAVDIARNQIADLVGADPREIVFTSGATESDNLAIKGAANFYQKKGKHIITSKTEHKAVLDTCRQLEREGFEVTYLAPQSNGLIDLNDLEAAVRDDTILISIMHVNNEIGVVQDIAAIGEMCRSRGIVFHVDATQSVGKLPIDLTKLKVDLMSFSAHKIYGPMGIGALYVRRKPRIRIEAQQHGGGHERGMRSGTLPVHQIVGMGEAYRIAKQEMESESQRLRGLRLRLWQGIKDIEEVFLNGDLEHGAPHILNVSFNYVEGESLMMSLKDLAVSSGSACTSASLEPSYVLRALGMNDELAHSSIRFSLGRFTTEEEIDYAIELIHKSIGRLRELSPLWEMFRQGVDLNSIEWSHH.

Residues 75 to 76 (AT), asparagine 155, glutamine 183, and 203 to 205 (SAH) contribute to the pyridoxal 5'-phosphate site. Lysine 206 carries the N6-(pyridoxal phosphate)lysine modification. Residue threonine 243 participates in pyridoxal 5'-phosphate binding. The active-site Cysteine persulfide intermediate is the cysteine 328. Cysteine 328 provides a ligand contact to [2Fe-2S] cluster.

This sequence belongs to the class-V pyridoxal-phosphate-dependent aminotransferase family. NifS/IscS subfamily. Homodimer. Forms a heterotetramer with IscU, interacts with other sulfur acceptors. Requires pyridoxal 5'-phosphate as cofactor.

The protein localises to the cytoplasm. The enzyme catalyses (sulfur carrier)-H + L-cysteine = (sulfur carrier)-SH + L-alanine. The protein operates within cofactor biosynthesis; iron-sulfur cluster biosynthesis. In terms of biological role, master enzyme that delivers sulfur to a number of partners involved in Fe-S cluster assembly, tRNA modification or cofactor biosynthesis. Catalyzes the removal of elemental sulfur atoms from cysteine to produce alanine. Functions as a sulfur delivery protein for Fe-S cluster synthesis onto IscU, an Fe-S scaffold assembly protein, as well as other S acceptor proteins. This chain is Cysteine desulfurase IscS, found in Photorhabdus laumondii subsp. laumondii (strain DSM 15139 / CIP 105565 / TT01) (Photorhabdus luminescens subsp. laumondii).